Reading from the N-terminus, the 296-residue chain is GTPase Era (296 aa).

Residues 3–170 (KSGFVTIVGR…KELMFKYIPE (168 aa)) enclose the Era-type G domain. The segment at 11–18 (GRPNVGKS) is G1. 11 to 18 (GRPNVGKS) provides a ligand contact to GTP. Residues 37 to 41 (QTTRN) form a G2 region. The interval 58 to 61 (DTPG) is G3. Residues 58–62 (DTPGI) and 120–123 (NKID) each bind GTP. A G4 region spans residues 120–123 (NKID). Residues 149–151 (ISA) are G5. A KH type-2 domain is found at 201–278 (LSEEVPHGIA…YIRLWVKVKE (78 aa)).

Belongs to the TRAFAC class TrmE-Era-EngA-EngB-Septin-like GTPase superfamily. Era GTPase family. In terms of assembly, monomer.

It localises to the cytoplasm. The protein resides in the cell membrane. An essential GTPase that binds both GDP and GTP, with rapid nucleotide exchange. Plays a role in 16S rRNA processing and 30S ribosomal subunit biogenesis and possibly also in cell cycle regulation and energy metabolism. The polypeptide is GTPase Era (Clostridium botulinum (strain 657 / Type Ba4)).